The primary structure comprises 25 residues: Alpha-amylase inhibitor (25 aa).

Monomer or homodimer. In terms of processing, may exist both in a glycosylated and in an unglycosylated form.

The protein resides in the secreted. Functionally, inhibits alpha-amylases but not trypsin. Is more effective against insect alpha-amylases than those of mammals. The polypeptide is Alpha-amylase inhibitor (Secale cereale (Rye)).